A 196-amino-acid chain; its full sequence is FAD-linked sulfhydryl oxidase ERV2 (196 aa).

The Cytoplasmic segment spans residues 1 to 12 (MKQIVKRSHAIR). Residues 13–35 (IVAALGIIGLWMFFSSNELSIAT) form a helical; Signal-anchor membrane-spanning segment. The Lumenal portion of the chain corresponds to 36–196 (PGLIKAKSGI…SLEKEAKQHG (161 aa)). The ERV/ALR sulfhydryl oxidase domain occupies 72–174 (MGDDKVKKEV…YDCATILEDY (103 aa)). Residues K78, R83, and W86 each contribute to the FAD site. An intrachain disulfide couples C121 to C124. 6 residues coordinate FAD: H127, C150, H153, N157, K162, and Y174. C150 and C167 form a disulfide bridge. C176 and C178 are joined by a disulfide.

As to quaternary structure, homodimer. Interacts with the substrate protein PDI1, forming transient intermolecular disulfide bridges. It depends on FAD as a cofactor.

The protein resides in the endoplasmic reticulum membrane. The catalysed reaction is 2 R'C(R)SH + O2 = R'C(R)S-S(R)CR' + H2O2. In terms of biological role, FAD-dependent sulfhydryl oxidase that catalyzes disulfide bond formation in the endoplasmic reticulum lumen in parallel to ERO1. The chain is FAD-linked sulfhydryl oxidase ERV2 (ERV2) from Saccharomyces cerevisiae (strain ATCC 204508 / S288c) (Baker's yeast).